Consider the following 309-residue polypeptide: Aspartate carbamoyltransferase catalytic subunit (309 aa).

Residues Arg54 and Thr55 each coordinate carbamoyl phosphate. An L-aspartate-binding site is contributed by Lys82. 3 residues coordinate carbamoyl phosphate: Arg104, His132, and Gln135. Positions 165 and 219 each coordinate L-aspartate. 2 residues coordinate carbamoyl phosphate: Gly260 and Pro261.

This sequence belongs to the aspartate/ornithine carbamoyltransferase superfamily. ATCase family. Heterododecamer (2C3:3R2) of six catalytic PyrB chains organized as two trimers (C3), and six regulatory PyrI chains organized as three dimers (R2).

It carries out the reaction carbamoyl phosphate + L-aspartate = N-carbamoyl-L-aspartate + phosphate + H(+). It functions in the pathway pyrimidine metabolism; UMP biosynthesis via de novo pathway; (S)-dihydroorotate from bicarbonate: step 2/3. Its function is as follows. Catalyzes the condensation of carbamoyl phosphate and aspartate to form carbamoyl aspartate and inorganic phosphate, the committed step in the de novo pyrimidine nucleotide biosynthesis pathway. This chain is Aspartate carbamoyltransferase catalytic subunit, found in Parafrankia sp. (strain EAN1pec).